The following is a 146-amino-acid chain: uncharacterized protein (146 aa).

A helical membrane pass occupies residues 7–27; sequence FVLSITIVLVILIIIAYIWYN.

The protein belongs to the asfivirus E146L family.

The protein resides in the host membrane. It is found in the virion. This is an uncharacterized protein from Ornithodoros (relapsing fever ticks).